The primary structure comprises 308 residues: MDSGGRIVYALNVEKTGFLRILSVTVLQRLYRRVFWFLFKCVAGIDVPRHAGSLAVFSFFFLSILYSISSGGYMNHFMKVAISNSGFLVTHVDMSGNKRMMEQDILKVLGLDEYPSMISFDIDKARFILEQQPWVRLADVQKIYPDRLRISLVEREPYAIWQHNGEMNIIDDTGYVIAPFQAGLVQNLSFVVGQGAQKTAKLFIQALSVYPQLQNHVRAYVRVGDRRWDLFLANGMRIMLPENGAIERLASFIEQGVAEDLFSRDISDIDLRLSDRITVSLSDEALTRRRAVVLEEERLLKMLKAGSV.

Residues 1 to 53 are Cytoplasmic-facing; that stretch reads MDSGGRIVYALNVEKTGFLRILSVTVLQRLYRRVFWFLFKCVAGIDVPRHAGS. Residues 54 to 74 form a helical membrane-spanning segment; sequence LAVFSFFFLSILYSISSGGYM. At 75 to 308 the chain is on the periplasmic side; that stretch reads NHFMKVAISN…LLKMLKAGSV (234 aa). Positions 87–155 constitute a POTRA domain; it reads FLVTHVDMSG…DRLRISLVER (69 aa).

It belongs to the FtsQ/DivIB family. FtsQ subfamily.

Its subcellular location is the cell inner membrane. Its function is as follows. Essential cell division protein. The protein is Cell division protein FtsQ of Bartonella bacilliformis.